The primary structure comprises 310 residues: Methionyl-tRNA formyltransferase (310 aa).

Ser-109 to Pro-112 contributes to the (6S)-5,6,7,8-tetrahydrofolate binding site.

It belongs to the Fmt family.

The enzyme catalyses L-methionyl-tRNA(fMet) + (6R)-10-formyltetrahydrofolate = N-formyl-L-methionyl-tRNA(fMet) + (6S)-5,6,7,8-tetrahydrofolate + H(+). In terms of biological role, attaches a formyl group to the free amino group of methionyl-tRNA(fMet). The formyl group appears to play a dual role in the initiator identity of N-formylmethionyl-tRNA by promoting its recognition by IF2 and preventing the misappropriation of this tRNA by the elongation apparatus. The sequence is that of Methionyl-tRNA formyltransferase from Macrococcus caseolyticus (strain JCSC5402) (Macrococcoides caseolyticum).